A 452-amino-acid polypeptide reads, in one-letter code: Phosphoglucosamine mutase (452 aa).

The active-site Phosphoserine intermediate is serine 103. Mg(2+) is bound by residues serine 103, aspartate 243, aspartate 245, and aspartate 247. Position 103 is a phosphoserine (serine 103).

This sequence belongs to the phosphohexose mutase family. The cofactor is Mg(2+). Post-translationally, activated by phosphorylation.

It carries out the reaction alpha-D-glucosamine 1-phosphate = D-glucosamine 6-phosphate. In terms of biological role, catalyzes the conversion of glucosamine-6-phosphate to glucosamine-1-phosphate. This is Phosphoglucosamine mutase from Limosilactobacillus fermentum (strain NBRC 3956 / LMG 18251) (Lactobacillus fermentum).